Here is an 81-residue protein sequence, read N- to C-terminus: Antitoxin MT2731 (81 aa).

Functionally, antitoxin component of a type II toxin-antitoxin (TA) system. Neutralizes the effect of cognate toxin MT2730. This Mycobacterium tuberculosis (strain CDC 1551 / Oshkosh) protein is Antitoxin MT2731.